Consider the following 352-residue polypeptide: Molybdenum import ATP-binding protein ModC (352 aa).

Positions 1–229 (MLELNFSQTL…SVMNPWLPKE (229 aa)) constitute an ABC transporter domain. 31-38 (GVSGAGKT) is an ATP binding site. The 64-residue stretch at 289 to 352 (QTSIRNVLRA…AQIKSVSITA (64 aa)) folds into the Mop domain.

This sequence belongs to the ABC transporter superfamily. Molybdate importer (TC 3.A.1.8) family. As to quaternary structure, the complex is composed of two ATP-binding proteins (ModC), two transmembrane proteins (ModB) and a solute-binding protein (ModA).

The protein localises to the cell inner membrane. The catalysed reaction is molybdate(out) + ATP + H2O = molybdate(in) + ADP + phosphate + H(+). Part of the ABC transporter complex ModABC involved in molybdenum import. Responsible for energy coupling to the transport system. The polypeptide is Molybdenum import ATP-binding protein ModC (Shigella boydii serotype 4 (strain Sb227)).